Consider the following 1095-residue polypeptide: DNA polymerase delta catalytic subunit (1095 aa).

Positions 1–11 (MNRSGISKKRP) are enriched in basic residues. Positions 1–37 (MNRSGISKKRPPPSNTPPPAGKHRATGDSTPSPAIGT) are disordered. 4 residues coordinate Zn(2+): Cys-1007, Cys-1010, Cys-1020, and Cys-1023. Residues 1007-1023 (CVGCKVPISNGTLCASC) form a CysA-type zinc finger. Residues Cys-1052, Cys-1055, Cys-1065, and Cys-1070 each contribute to the [4Fe-4S] cluster site. Positions 1052–1070 (CQECQGSLHQDVLCTSRDC) match the CysB motif motif.

This sequence belongs to the DNA polymerase type-B family. In terms of assembly, heterodimer with subunits of 125 kDa and 50 kDa. The 125 kDa subunit contains the polymerase active site and most likely the active site for the 3'-5' exonuclease activity. [4Fe-4S] cluster is required as a cofactor.

The protein resides in the nucleus. It catalyses the reaction DNA(n) + a 2'-deoxyribonucleoside 5'-triphosphate = DNA(n+1) + diphosphate. Its function is as follows. This polymerase possesses two enzymatic activities: DNA synthesis (polymerase) and an exonucleolytic activity that degrades single-stranded DNA in the 3'- to 5'-direction. This is DNA polymerase delta catalytic subunit (POLD1) from Arabidopsis thaliana (Mouse-ear cress).